Here is a 775-residue protein sequence, read N- to C-terminus: Suppressor of glycerol defect protein 1 (775 aa).

2 stretches are compositionally biased toward basic residues: residues 1-11 and 28-49; these read MRPIKKSRSLK and RRGKRNHNLPHREKRKFARISR. Disordered regions lie at residues 1 to 101 and 152 to 253; these read MRPI…LLDP and IDDI…GGDK. Basic and acidic residues-rich tracts occupy residues 52–79, 177–193, and 209–223; these read NGYENRKITEEGDSKSSELNDDYLDAHR, TGDHGSVDELESEREGN, and DEFHQPETKPIRMDP. Residues 262 to 463 enclose the MIF4G domain; the sequence is RRKLQGSLNK…ESITNLKENK (202 aa). One can recognise an MI domain in the interval 565–689; it reads TLRTSIFVAL…PLTILKHVDF (125 aa).

It belongs to the CWC22 family.

It localises to the nucleus. The protein localises to the nucleolus. In terms of biological role, involved in osmoregulatory glycerol response. The chain is Suppressor of glycerol defect protein 1 (sgd1) from Schizosaccharomyces pombe (strain 972 / ATCC 24843) (Fission yeast).